We begin with the raw amino-acid sequence, 322 residues long: MSARDGNTASEWVPTGSVTVRVPGKVNLYLDVGDRRDDGYHELTTVFHAVSLLDEVTVRTADILSLEMTGEGAESLPTDERNLAWRAAELMADHVGRSPDVAISIEKTIPVAGGMAGGSADAAAVLVAMNSLWELGVPRRDLHALAAQLGSDVPFALHGGTALGTGRGEELATVLTRNTFHWVLAFSPGGLSTAKVFAEIDRLRAEEDRTLPPRLESPEPVLAALASGDPAQLAPLLGNDLQPAALSLDSTLRRTLRAGVDAGALAGVVSGSGPTCAFLCGSAGAAVDVGTELAGAGVCRTVRVASGPVQGARVVPSPSNAG.

The active site involves Lys-25. 110-120 lines the ATP pocket; sequence PVAGGMAGGSA. Asp-152 is a catalytic residue.

This sequence belongs to the GHMP kinase family. IspE subfamily.

It carries out the reaction 4-CDP-2-C-methyl-D-erythritol + ATP = 4-CDP-2-C-methyl-D-erythritol 2-phosphate + ADP + H(+). Its pathway is isoprenoid biosynthesis; isopentenyl diphosphate biosynthesis via DXP pathway; isopentenyl diphosphate from 1-deoxy-D-xylulose 5-phosphate: step 3/6. Its function is as follows. Catalyzes the phosphorylation of the position 2 hydroxy group of 4-diphosphocytidyl-2C-methyl-D-erythritol. This is 4-diphosphocytidyl-2-C-methyl-D-erythritol kinase from Mycolicibacterium vanbaalenii (strain DSM 7251 / JCM 13017 / BCRC 16820 / KCTC 9966 / NRRL B-24157 / PYR-1) (Mycobacterium vanbaalenii).